The primary structure comprises 429 residues: Glutamyl-tRNA reductase (429 aa).

Residues 50–53 (TCNR), Ser108, 113–115 (EPQ), and Gln119 each bind substrate. The active-site Nucleophile is Cys51. 188–193 (GAGEMI) is a binding site for NADP(+).

This sequence belongs to the glutamyl-tRNA reductase family. As to quaternary structure, homodimer.

It catalyses the reaction (S)-4-amino-5-oxopentanoate + tRNA(Glu) + NADP(+) = L-glutamyl-tRNA(Glu) + NADPH + H(+). The protein operates within porphyrin-containing compound metabolism; protoporphyrin-IX biosynthesis; 5-aminolevulinate from L-glutamyl-tRNA(Glu): step 1/2. Its function is as follows. Catalyzes the NADPH-dependent reduction of glutamyl-tRNA(Glu) to glutamate 1-semialdehyde (GSA). The chain is Glutamyl-tRNA reductase from Polaromonas naphthalenivorans (strain CJ2).